The primary structure comprises 521 residues: Hyccin (521 aa).

A Phosphothreonine modification is found at threonine 306. Serine 321 is subject to Phosphoserine. Low complexity predominate over residues 355-373 (AASSTSQSGLSNSSHNCSN). Positions 355-413 (AASSTSQSGLSNSSHNCSNKTSVGKNQRRSGGSKAGAKERETAGESCRDHFARKQTQRA) are disordered. The span at 390–406 (GAKERETAGESCRDHFA) shows a compositional bias: basic and acidic residues. Phosphoserine is present on residues serine 415, serine 422, serine 433, serine 453, and serine 465.

It belongs to the Hyccin family. In terms of assembly, component of a phosphatidylinositol 4-kinase (PI4K) complex, composed of PI4KA, EFR3 (EFR3A or EFR3B), TTC7 (TTC7A or TTC7B) and HYCC (HYCC1 or HYCC2). Interacts with TTC7 (TTC7A or TTC7B), interaction is direct. In terms of tissue distribution, predominantly expressed in the central nervous system, where it is found in neurons but not in myelinating cells. Lower abundance is observed in peripheral neurons, where it is detectable only at early postnatal ages. Expressed in both oligodendrocytes and neurons.

The protein resides in the cytoplasm. It localises to the cytosol. The protein localises to the cell membrane. Component of a complex required to localize phosphatidylinositol 4-kinase (PI4K) to the plasma membrane. The complex acts as a regulator of phosphatidylinositol 4-phosphate (PtdIns(4)P) synthesis. HYCC1 plays a key role in oligodendrocytes formation, a cell type with expanded plasma membrane that requires generation of PtdIns(4)P. Its role in oligodendrocytes formation probably explains its importance in myelination of the central and peripheral nervous system. May also have a role in the beta-catenin/Lef signaling pathway. In Mus musculus (Mouse), this protein is Hyccin (Hycc1).